The primary structure comprises 66 residues: Large ribosomal subunit protein uL29 (66 aa).

The protein belongs to the universal ribosomal protein uL29 family.

The chain is Large ribosomal subunit protein uL29 from Bacillus anthracis (strain CDC 684 / NRRL 3495).